Reading from the N-terminus, the 171-residue chain is Co-chaperone protein HscB (171 aa).

One can recognise a J domain in the interval 2–74; it reads DYFTLFGLPA…LMRAEYLLSL (73 aa).

This sequence belongs to the HscB family. Interacts with HscA and stimulates its ATPase activity. Interacts with IscU.

Its function is as follows. Co-chaperone involved in the maturation of iron-sulfur cluster-containing proteins. Seems to help targeting proteins to be folded toward HscA. This chain is Co-chaperone protein HscB, found in Shigella flexneri serotype 5b (strain 8401).